The following is a 738-amino-acid chain: Protein ALEX (738 aa).

Disordered stretches follow at residues 1–105 (MSPS…EEAM), 155–188 (REDY…ASHA), 237–350 (TTFP…LPKP), 387–516 (MSGQ…LGQP), 528–578 (GEPG…LDPP), and 611–689 (GMRL…RPRI). Over residues 257 to 273 (GSTTTPLSIWTAPQSQV) the composition is skewed to polar residues. The span at 279–301 (KSREPQLRASTQRDPHLSDKQPR) shows a compositional bias: basic and acidic residues. Positions 387 to 396 (MSGQNQTEGQ) are enriched in polar residues. 3 stretches are compositionally biased toward pro residues: residues 410 to 438 (QPPP…PPSQ), 448 to 467 (PSLP…PRQP), and 476 to 485 (PGQPPSPLRS). 3 stretches are compositionally biased toward low complexity: residues 542-564 (PSLP…LPAG), 615-626 (RPASARSSPPAM), and 656-671 (ATRS…EAAS).

This sequence belongs to the ALEX family. As to quaternary structure, interacts with the N-terminal region of the XLas isoforms of guanine nucleotide-binding protein G(s) subunit alpha.

The protein resides in the cell membrane. Its subcellular location is the cell projection. It localises to the ruffle. May inhibit the adenylyl cyclase-stimulating activity of guanine nucleotide-binding protein G(s) subunit alpha which is produced from the same locus in a different open reading frame. The sequence is that of Protein ALEX from Rattus norvegicus (Rat).